The sequence spans 91 residues: Small ribosomal subunit protein uS15 (91 aa).

Belongs to the universal ribosomal protein uS15 family. As to quaternary structure, part of the 30S ribosomal subunit. Forms a bridge to the 50S subunit in the 70S ribosome, contacting the 23S rRNA.

Functionally, one of the primary rRNA binding proteins, it binds directly to 16S rRNA where it helps nucleate assembly of the platform of the 30S subunit by binding and bridging several RNA helices of the 16S rRNA. Its function is as follows. Forms an intersubunit bridge (bridge B4) with the 23S rRNA of the 50S subunit in the ribosome. In Sulfurimonas denitrificans (strain ATCC 33889 / DSM 1251) (Thiomicrospira denitrificans (strain ATCC 33889 / DSM 1251)), this protein is Small ribosomal subunit protein uS15.